The primary structure comprises 175 residues: Protein LAZY 3 (175 aa).

The disordered stretch occupies residues 9 to 39 (RKLSGKKRVPTSDSSQEPSSPPLSKEVQGLP). The IGT motif motif lies at 44-50 (TFLAIGT).

The protein belongs to the LAZY family. Specifically expressed in roots. Expressed in root tips of young seedlings.

In terms of biological role, involved in the regulation of root gravitropism. Functions redundantly with LAZY2 and LAZY4 in the control of root gravitropism. Functions redundantly with LAZY1, LAZY2 and LAZY4 to control plant architecture by coupling gravity sensing to the formation of auxin gradients. The sequence is that of Protein LAZY 3 from Arabidopsis thaliana (Mouse-ear cress).